Here is an 89-residue protein sequence, read N- to C-terminus: Large ribosomal subunit protein bL31B (89 aa).

It belongs to the bacterial ribosomal protein bL31 family. Type B subfamily. In terms of assembly, part of the 50S ribosomal subunit.

This chain is Large ribosomal subunit protein bL31B, found in Haemophilus ducreyi (strain 35000HP / ATCC 700724).